A 416-amino-acid polypeptide reads, in one-letter code: UDP-N-acetylglucosamine 1-carboxyvinyltransferase (416 aa).

22–23 (KN) contributes to the phosphoenolpyruvate binding site. Arg-92 is a UDP-N-acetyl-alpha-D-glucosamine binding site. Cys-116 functions as the Proton donor in the catalytic mechanism. Cys-116 bears the 2-(S-cysteinyl)pyruvic acid O-phosphothioketal mark. UDP-N-acetyl-alpha-D-glucosamine is bound by residues 121–125 (RPVDQ), Asp-304, and Ile-326.

The protein belongs to the EPSP synthase family. MurA subfamily.

It localises to the cytoplasm. The enzyme catalyses phosphoenolpyruvate + UDP-N-acetyl-alpha-D-glucosamine = UDP-N-acetyl-3-O-(1-carboxyvinyl)-alpha-D-glucosamine + phosphate. The protein operates within cell wall biogenesis; peptidoglycan biosynthesis. In terms of biological role, cell wall formation. Adds enolpyruvyl to UDP-N-acetylglucosamine. This Cupriavidus pinatubonensis (strain JMP 134 / LMG 1197) (Cupriavidus necator (strain JMP 134)) protein is UDP-N-acetylglucosamine 1-carboxyvinyltransferase.